We begin with the raw amino-acid sequence, 138 residues long: Small ribosomal subunit protein uS11c (138 aa).

The segment at 1–21 (MAKSISKIGSRKNARIGSRKQ) is disordered. A compositionally biased stretch (basic residues) spans 9-21 (GSRKNARIGSRKQ).

This sequence belongs to the universal ribosomal protein uS11 family. As to quaternary structure, part of the 30S ribosomal subunit.

The protein resides in the plastid. It is found in the chloroplast. The chain is Small ribosomal subunit protein uS11c from Cicer arietinum (Chickpea).